The primary structure comprises 327 residues: Ran-specific GTPase-activating protein 2 (327 aa).

2 disordered regions span residues 1–96 and 109–205; these read MSET…KKED and GFGV…KQEV. The span at 24–83 shows a compositional bias: basic and acidic residues; it reads PIDKLDGTPKRPREKDQDEQAEETSDKSEAPNKNDEEKKEEGKKDQEPSHKKIKVDDGKT. Threonine 31 carries the post-translational modification Phosphothreonine. The span at 122 to 133 shows a compositional bias: polar residues; that stretch reads ATTSTESLPASD. A compositionally biased stretch (low complexity) spans 140–152; that stretch reads FAFGSGLSFGSGF. 2 stretches are compositionally biased toward basic and acidic residues: residues 157 to 179 and 189 to 205; these read NKTE…KVHS and EDTK…KQEV. Serine 179 bears the Phosphoserine mark. The RanBD1 domain maps to 191–327; sequence TKDKPKPLKL…YNIIVKSVPK (137 aa).

As to quaternary structure, interacts with GSP1, XPO1 and SRM1.

Its subcellular location is the nucleus. Important for the export of protein containing nuclear export signal (NES) out of the nucleus. Stimulates the GTPase activity of GSP1. This chain is Ran-specific GTPase-activating protein 2 (YRB2), found in Saccharomyces cerevisiae (strain ATCC 204508 / S288c) (Baker's yeast).